Here is a 554-residue protein sequence, read N- to C-terminus: DNA ligase B (554 aa).

The N6-AMP-lysine intermediate role is filled by lysine 122.

The protein belongs to the NAD-dependent DNA ligase family. LigB subfamily.

The catalysed reaction is NAD(+) + (deoxyribonucleotide)n-3'-hydroxyl + 5'-phospho-(deoxyribonucleotide)m = (deoxyribonucleotide)n+m + AMP + beta-nicotinamide D-nucleotide.. Functionally, catalyzes the formation of phosphodiester linkages between 5'-phosphoryl and 3'-hydroxyl groups in double-stranded DNA using NAD as a coenzyme and as the energy source for the reaction. This Pseudomonas fluorescens (strain SBW25) protein is DNA ligase B.